Consider the following 419-residue polypeptide: MTAESDSPDGPVSAGTGRPVRLSLTRRAARPARHLADLSRDERRQVAVALGQPAFRADQVSRHYFARLVDADETDAMTDLPENARGPLLEALLPRLLVPARTLSCDDGLTRKTAWRTADGALLESVIMRYPDRATVCVSSQAGCGMGCPFCATGQGGLTRNLSTAEIVEQVVHAARVLRRQELAGGQGRLSNVVFMGMGEPLANYTAVTAALRRLIAPSPEGLGLSARGLTVSTVGLVPAMRRLAGEGLPVTLAVSLHAPDDELRDELVPINTRWPVAEVLAAAWEYAEVTGRRVSIEYALIDGVNDDVARADALATLLAGRLAHVNLIPLNPTEGSSWQASAPAGQRAFVRRLRERGIATTVRDTRGREIAAACGQLAAEPAGRARRVESARPVESARPVGVAGAASGSPAHGSRVLR.

The segment at Met1–Arg21 is disordered. The Proton acceptor role is filled by Glu124. Residues Tyr130–Arg369 form the Radical SAM core domain. Cysteines 137 and 375 form a disulfide. Residues Cys144, Cys148, and Cys151 each contribute to the [4Fe-4S] cluster site. Residues Gly199–Glu200, Ser233, Ser256–His258, and Asn332 contribute to the S-adenosyl-L-methionine site. Cys375 serves as the catalytic S-methylcysteine intermediate. The interval Ala383–Arg419 is disordered. Residues Ser397–Arg419 show a composition bias toward low complexity.

The protein belongs to the radical SAM superfamily. RlmN family. [4Fe-4S] cluster serves as cofactor.

Its subcellular location is the cytoplasm. The catalysed reaction is adenosine(2503) in 23S rRNA + 2 reduced [2Fe-2S]-[ferredoxin] + 2 S-adenosyl-L-methionine = 2-methyladenosine(2503) in 23S rRNA + 5'-deoxyadenosine + L-methionine + 2 oxidized [2Fe-2S]-[ferredoxin] + S-adenosyl-L-homocysteine. It catalyses the reaction adenosine(37) in tRNA + 2 reduced [2Fe-2S]-[ferredoxin] + 2 S-adenosyl-L-methionine = 2-methyladenosine(37) in tRNA + 5'-deoxyadenosine + L-methionine + 2 oxidized [2Fe-2S]-[ferredoxin] + S-adenosyl-L-homocysteine. Functionally, specifically methylates position 2 of adenine 2503 in 23S rRNA and position 2 of adenine 37 in tRNAs. This Frankia alni (strain DSM 45986 / CECT 9034 / ACN14a) protein is Probable dual-specificity RNA methyltransferase RlmN.